Reading from the N-terminus, the 247-residue chain is uncharacterized protein (247 aa).

Residues 102 to 247 (RSIMSRTNDN…ISEHHYRIKR (146 aa)) enclose the N-acetyltransferase domain.

The protein belongs to the acetyltransferase family.

This is an uncharacterized protein from Bacillus subtilis (strain 168).